Consider the following 242-residue polypeptide: Small ribosomal subunit protein uS2 (242 aa).

Belongs to the universal ribosomal protein uS2 family.

The polypeptide is Small ribosomal subunit protein uS2 (Shouchella clausii (strain KSM-K16) (Alkalihalobacillus clausii)).